A 136-amino-acid chain; its full sequence is MLSPKRTKFRKQHRGRMKGKSCRGNRICFGRYALQALEPTWITARQIEAGRRAITRYARRGGKIWVRIFPDKPVTLRPTETRMGSGKGSPEYWVAVVKPGRILYEMGGVSETVARAAISIAASKMPIRSQFIRLEI.

Positions 1 to 20 (MLSPKRTKFRKQHRGRMKGK) are disordered.

Belongs to the universal ribosomal protein uL16 family. Part of the 50S ribosomal subunit.

It localises to the plastid. It is found in the chloroplast. This Brachypodium distachyon (Purple false brome) protein is Large ribosomal subunit protein uL16c.